A 177-amino-acid polypeptide reads, in one-letter code: ATP synthase subunit delta (177 aa).

The protein belongs to the ATPase delta chain family. As to quaternary structure, F-type ATPases have 2 components, F(1) - the catalytic core - and F(0) - the membrane proton channel. F(1) has five subunits: alpha(3), beta(3), gamma(1), delta(1), epsilon(1). F(0) has three main subunits: a(1), b(2) and c(10-14). The alpha and beta chains form an alternating ring which encloses part of the gamma chain. F(1) is attached to F(0) by a central stalk formed by the gamma and epsilon chains, while a peripheral stalk is formed by the delta and b chains.

The protein resides in the cell inner membrane. In terms of biological role, f(1)F(0) ATP synthase produces ATP from ADP in the presence of a proton or sodium gradient. F-type ATPases consist of two structural domains, F(1) containing the extramembraneous catalytic core and F(0) containing the membrane proton channel, linked together by a central stalk and a peripheral stalk. During catalysis, ATP synthesis in the catalytic domain of F(1) is coupled via a rotary mechanism of the central stalk subunits to proton translocation. This protein is part of the stalk that links CF(0) to CF(1). It either transmits conformational changes from CF(0) to CF(1) or is implicated in proton conduction. The protein is ATP synthase subunit delta of Shewanella sp. (strain ANA-3).